The following is an 886-amino-acid chain: DNA mismatch repair protein MutS (886 aa).

Residue 641–648 (GPNMAGKS) participates in ATP binding.

The protein belongs to the DNA mismatch repair MutS family.

In terms of biological role, this protein is involved in the repair of mismatches in DNA. It is possible that it carries out the mismatch recognition step. This protein has a weak ATPase activity. This is DNA mismatch repair protein MutS from Rickettsia felis (strain ATCC VR-1525 / URRWXCal2) (Rickettsia azadi).